A 315-amino-acid polypeptide reads, in one-letter code: NAD kinase (315 aa).

Residue D91 is the Proton acceptor of the active site. NAD(+) contacts are provided by residues 91–92 (DG), R96, 165–166 (NE), D195, and 206–211 (TAYAFS).

It belongs to the NAD kinase family. Requires a divalent metal cation as cofactor.

It localises to the cytoplasm. It carries out the reaction NAD(+) + ATP = ADP + NADP(+) + H(+). Functionally, involved in the regulation of the intracellular balance of NAD and NADP, and is a key enzyme in the biosynthesis of NADP. Catalyzes specifically the phosphorylation on 2'-hydroxyl of the adenosine moiety of NAD to yield NADP. The protein is NAD kinase of Rhodococcus erythropolis (strain PR4 / NBRC 100887).